Here is a 66-residue protein sequence, read N- to C-terminus: Large ribosomal subunit protein bL35 (66 aa).

The disordered stretch occupies residues 1 to 26 (MPKQKTHRGAAKRFKKTGSGKLKRSH).

Belongs to the bacterial ribosomal protein bL35 family.

This is Large ribosomal subunit protein bL35 from Bacillus anthracis.